The sequence spans 300 residues: tRNA dimethylallyltransferase (300 aa).

11–18 is an ATP binding site; it reads GPTAVGKS. 13–18 serves as a coordination point for substrate; it reads TAVGKS. The segment at 35 to 38 is interaction with substrate tRNA; it reads DSIQ.

This sequence belongs to the IPP transferase family. In terms of assembly, monomer. The cofactor is Mg(2+).

It catalyses the reaction adenosine(37) in tRNA + dimethylallyl diphosphate = N(6)-dimethylallyladenosine(37) in tRNA + diphosphate. In terms of biological role, catalyzes the transfer of a dimethylallyl group onto the adenine at position 37 in tRNAs that read codons beginning with uridine, leading to the formation of N6-(dimethylallyl)adenosine (i(6)A). This Borrelia recurrentis (strain A1) protein is tRNA dimethylallyltransferase.